We begin with the raw amino-acid sequence, 270 residues long: MKPRALVLHATGTNRDGDAARALELAGAEPEIVHINKLKAKEKNWKDYEILVIPGGFSYADALGAGKLFALDLSNYFFDEVSEFVAAGKPVIGICNGFQVLVKSGILPGKEKDGKVILDKDGYKNRQATLTYNKQGRFECRFTTMIPQKSNCIWTKDLKGNIHCPIAHGEGRFLTDSQKTLDDLFEKGQIALVYGGKDAEKSIPANGEYPFNPNGSLADIAGICNTKGNVLGLMPHPENNVVIRERDSEEEKERTKLCLDMWKAGVNYVL.

Residues 5–251 form the Glutamine amidotransferase type-1 domain; that stretch reads ALVLHATGTN…VIRERDSEEE (247 aa). The active-site Nucleophile is the Cys-95. Catalysis depends on residues His-236 and Glu-238.

Part of the FGAM synthase complex composed of 1 PurL, 1 PurQ and 2 PurS subunits.

It localises to the cytoplasm. The catalysed reaction is N(2)-formyl-N(1)-(5-phospho-beta-D-ribosyl)glycinamide + L-glutamine + ATP + H2O = 2-formamido-N(1)-(5-O-phospho-beta-D-ribosyl)acetamidine + L-glutamate + ADP + phosphate + H(+). The enzyme catalyses L-glutamine + H2O = L-glutamate + NH4(+). The protein operates within purine metabolism; IMP biosynthesis via de novo pathway; 5-amino-1-(5-phospho-D-ribosyl)imidazole from N(2)-formyl-N(1)-(5-phospho-D-ribosyl)glycinamide: step 1/2. Its function is as follows. Part of the phosphoribosylformylglycinamidine synthase complex involved in the purines biosynthetic pathway. Catalyzes the ATP-dependent conversion of formylglycinamide ribonucleotide (FGAR) and glutamine to yield formylglycinamidine ribonucleotide (FGAM) and glutamate. The FGAM synthase complex is composed of three subunits. PurQ produces an ammonia molecule by converting glutamine to glutamate. PurL transfers the ammonia molecule to FGAR to form FGAM in an ATP-dependent manner. PurS interacts with PurQ and PurL and is thought to assist in the transfer of the ammonia molecule from PurQ to PurL. In Treponema denticola (strain ATCC 35405 / DSM 14222 / CIP 103919 / JCM 8153 / KCTC 15104), this protein is Phosphoribosylformylglycinamidine synthase subunit PurQ.